The sequence spans 524 residues: 2-isopropylmalate synthase (524 aa).

Positions 5 to 267 (VIIFDTTLRD…HTNIRHSEIH (263 aa)) constitute a Pyruvate carboxyltransferase domain. Positions 14, 202, 204, and 238 each coordinate Mn(2+). The tract at residues 392-524 (KLEYLGVQSG…KTDKINTESV (133 aa)) is regulatory domain.

The protein belongs to the alpha-IPM synthase/homocitrate synthase family. LeuA type 1 subfamily. As to quaternary structure, homodimer. Requires Mn(2+) as cofactor.

The protein localises to the cytoplasm. It carries out the reaction 3-methyl-2-oxobutanoate + acetyl-CoA + H2O = (2S)-2-isopropylmalate + CoA + H(+). It participates in amino-acid biosynthesis; L-leucine biosynthesis; L-leucine from 3-methyl-2-oxobutanoate: step 1/4. Catalyzes the condensation of the acetyl group of acetyl-CoA with 3-methyl-2-oxobutanoate (2-ketoisovalerate) to form 3-carboxy-3-hydroxy-4-methylpentanoate (2-isopropylmalate). The chain is 2-isopropylmalate synthase from Aeromonas salmonicida (strain A449).